The chain runs to 303 residues: ATP-dependent (S)-NAD(P)H-hydrate dehydratase (303 aa).

A YjeF C-terminal domain is found at 12–299 (QQQLVCSVIP…AEVRTAFSML (288 aa)). Residues Gly-106 and 158–164 (NAVELDR) each bind (6S)-NADPHX. Residues 194 to 198 (KGSED) and 213 to 222 (GSPRRCGGQG) contribute to the ATP site. (6S)-NADPHX is bound at residue Asp-223.

It belongs to the NnrD/CARKD family. Mg(2+) is required as a cofactor.

It carries out the reaction (6S)-NADHX + ATP = ADP + phosphate + NADH + H(+). The enzyme catalyses (6S)-NADPHX + ATP = ADP + phosphate + NADPH + H(+). Functionally, catalyzes the dehydration of the S-form of NAD(P)HX at the expense of ATP, which is converted to ADP. Together with NAD(P)HX epimerase, which catalyzes the epimerization of the S- and R-forms, the enzyme allows the repair of both epimers of NAD(P)HX, a damaged form of NAD(P)H that is a result of enzymatic or heat-dependent hydration. The chain is ATP-dependent (S)-NAD(P)H-hydrate dehydratase from Ixodes scapularis (Black-legged tick).